Here is a 198-residue protein sequence, read N- to C-terminus: Protein-L-isoaspartate O-methyltransferase (198 aa).

The active site involves serine 50.

This sequence belongs to the methyltransferase superfamily. L-isoaspartyl/D-aspartyl protein methyltransferase family.

It is found in the cytoplasm. It catalyses the reaction [protein]-L-isoaspartate + S-adenosyl-L-methionine = [protein]-L-isoaspartate alpha-methyl ester + S-adenosyl-L-homocysteine. Its function is as follows. Catalyzes the methyl esterification of L-isoaspartyl residues in peptides and proteins that result from spontaneous decomposition of normal L-aspartyl and L-asparaginyl residues. It plays a role in the repair and/or degradation of damaged proteins. In Thermosipho melanesiensis (strain DSM 12029 / CIP 104789 / BI429), this protein is Protein-L-isoaspartate O-methyltransferase.